The sequence spans 304 residues: Quinolinate synthase (304 aa).

Positions 24 and 41 each coordinate iminosuccinate. A [4Fe-4S] cluster-binding site is contributed by cysteine 86. Iminosuccinate is bound by residues 112-114 (YVN) and serine 129. Cysteine 171 is a binding site for [4Fe-4S] cluster. Iminosuccinate-binding positions include 197 to 199 (HPE) and threonine 214. Residue cysteine 259 participates in [4Fe-4S] cluster binding.

It belongs to the quinolinate synthase family. Type 2 subfamily. It depends on [4Fe-4S] cluster as a cofactor.

It localises to the cytoplasm. It catalyses the reaction iminosuccinate + dihydroxyacetone phosphate = quinolinate + phosphate + 2 H2O + H(+). The protein operates within cofactor biosynthesis; NAD(+) biosynthesis; quinolinate from iminoaspartate: step 1/1. Functionally, catalyzes the condensation of iminoaspartate with dihydroxyacetone phosphate to form quinolinate. The protein is Quinolinate synthase of Geotalea uraniireducens (strain Rf4) (Geobacter uraniireducens).